The sequence spans 201 residues: Large ribosomal subunit protein uL4 (201 aa).

Positions 46-71 (QKTRAEVVGSGKKPWRQKGTGRARAG) are disordered.

It belongs to the universal ribosomal protein uL4 family. Part of the 50S ribosomal subunit.

Functionally, one of the primary rRNA binding proteins, this protein initially binds near the 5'-end of the 23S rRNA. It is important during the early stages of 50S assembly. It makes multiple contacts with different domains of the 23S rRNA in the assembled 50S subunit and ribosome. Its function is as follows. Forms part of the polypeptide exit tunnel. The protein is Large ribosomal subunit protein uL4 of Shewanella woodyi (strain ATCC 51908 / MS32).